The following is a 143-amino-acid chain: uncharacterized protein (143 aa).

The interval 1 to 143 (MRSSRQKASI…WFSQTVKRKA (143 aa)) is disordered. Basic and acidic residues-rich tracts occupy residues 34–46 (ISAE…KHLD) and 61–76 (EYQK…RKIV). Acidic residues-rich tracts occupy residues 77 to 93 (DDEE…PEEE) and 103 to 115 (YEEE…PDLA).

This is an uncharacterized protein from Bacillus subtilis (strain 168).